The primary structure comprises 626 residues: Procollagen galactosyltransferase 2 (626 aa).

A signal peptide spans Met1–Ala27. N-linked (GlcNAc...) asparagine glycans are attached at residues Asn97, Asn185, Asn382, and Asn580. Positions Asn604–Leu626 are disordered. A Prevents secretion from ER motif is present at residues Arg623–Leu626.

The protein belongs to the glycosyltransferase 25 family. In terms of tissue distribution, expressed in brain and skeletal muscle.

It localises to the endoplasmic reticulum lumen. It catalyses the reaction (5R)-5-hydroxy-L-lysyl-[collagen] + UDP-alpha-D-galactose = (5R)-5-O-(beta-D-galactosyl)-5-hydroxy-L-lysyl-[collagen] + UDP + H(+). Its function is as follows. Beta-galactosyltransferase that transfers beta-galactose to hydroxylysine residues of collagen. The sequence is that of Procollagen galactosyltransferase 2 (COLGALT2) from Homo sapiens (Human).